The primary structure comprises 171 residues: Phosphopantetheine adenylyltransferase (171 aa).

Position 9 (Thr-9) interacts with substrate. Residues 9 to 10 (TF) and His-17 contribute to the ATP site. Substrate is bound by residues Lys-41, Leu-78, and Arg-92. Residues 93–95 (GLR), Glu-103, and 128–134 (HQAIASK) each bind ATP.

Belongs to the bacterial CoaD family. Homohexamer. Mg(2+) serves as cofactor.

The protein localises to the cytoplasm. The catalysed reaction is (R)-4'-phosphopantetheine + ATP + H(+) = 3'-dephospho-CoA + diphosphate. Its pathway is cofactor biosynthesis; coenzyme A biosynthesis; CoA from (R)-pantothenate: step 4/5. Functionally, reversibly transfers an adenylyl group from ATP to 4'-phosphopantetheine, yielding dephospho-CoA (dPCoA) and pyrophosphate. The polypeptide is Phosphopantetheine adenylyltransferase (Dinoroseobacter shibae (strain DSM 16493 / NCIMB 14021 / DFL 12)).